A 190-amino-acid chain; its full sequence is UPF0301 protein Rmet_2743 (190 aa).

Belongs to the UPF0301 (AlgH) family.

In Cupriavidus metallidurans (strain ATCC 43123 / DSM 2839 / NBRC 102507 / CH34) (Ralstonia metallidurans), this protein is UPF0301 protein Rmet_2743.